The following is a 113-amino-acid chain: Iron-sulfur cluster insertion protein ErpA (113 aa).

Iron-sulfur cluster contacts are provided by Cys-41, Cys-105, and Cys-107.

This sequence belongs to the HesB/IscA family. Homodimer. Iron-sulfur cluster is required as a cofactor.

Functionally, required for insertion of 4Fe-4S clusters for at least IspG. The protein is Iron-sulfur cluster insertion protein ErpA of Actinobacillus pleuropneumoniae serotype 7 (strain AP76).